Consider the following 283-residue polypeptide: Pantothenate synthetase (283 aa).

Residue 26–33 coordinates ATP; that stretch reads MGNLHDGH. His-33 serves as the catalytic Proton donor. A (R)-pantoate-binding site is contributed by Gln-57. Gln-57 contacts beta-alanine. 148–151 is a binding site for ATP; the sequence is GKKD. (R)-pantoate is bound at residue Gln-154. ATP-binding positions include Ala-177 and 185-188; that span reads LSSR.

The protein belongs to the pantothenate synthetase family. As to quaternary structure, homodimer.

The protein resides in the cytoplasm. It carries out the reaction (R)-pantoate + beta-alanine + ATP = (R)-pantothenate + AMP + diphosphate + H(+). It functions in the pathway cofactor biosynthesis; (R)-pantothenate biosynthesis; (R)-pantothenate from (R)-pantoate and beta-alanine: step 1/1. In terms of biological role, catalyzes the condensation of pantoate with beta-alanine in an ATP-dependent reaction via a pantoyl-adenylate intermediate. The polypeptide is Pantothenate synthetase (Delftia acidovorans (strain DSM 14801 / SPH-1)).